Here is a 612-residue protein sequence, read N- to C-terminus: Indole-3-acetic acid-amido synthetase GH3.6 (612 aa).

It belongs to the IAA-amido conjugating enzyme family. In terms of tissue distribution, expressed in cotyledons, stipules, true leaves, hypocotyls, and all parts of the roots. Not detected in flowers.

Functionally, catalyzes the synthesis of indole-3-acetic acid (IAA)-amino acid conjugates, providing a mechanism for the plant to cope with the presence of excess auxin. Strongly reactive with Glu, Gln, Trp, Asp, Ala, Leu, Phe, Gly, Tyr, Met, Ile and Val. Little or no product formation with His, Ser, Thr, Arg, Lys, or Cys. Also active on pyruvic and butyric acid analogs of IAA, PAA and the synthetic auxin naphthaleneacetic acid (NAA). The two chlorinated synthetic auxin herbicides 2,4-D and 3,6-dichloro-o-anisic acid (dicamba) cannot be used as substrates. Involved in auxin signal transduction. Inhibits shoot and hypocotyl cell elongation, and lateral root cell differentiation in light. This chain is Indole-3-acetic acid-amido synthetase GH3.6 (GH3.6), found in Arabidopsis thaliana (Mouse-ear cress).